Consider the following 415-residue polypeptide: U-box domain-containing protein 29 (415 aa).

The U-box domain maps to 11-85 (TVPSFFKCPI…NIWSDSIGRR (75 aa)). 2 ARM repeats span residues 221–263 (KSKL…TISK) and 265–307 (KRVR…TLSS).

In terms of assembly, binds to SD129 and SD25.

The catalysed reaction is S-ubiquitinyl-[E2 ubiquitin-conjugating enzyme]-L-cysteine + [acceptor protein]-L-lysine = [E2 ubiquitin-conjugating enzyme]-L-cysteine + N(6)-ubiquitinyl-[acceptor protein]-L-lysine.. It functions in the pathway protein modification; protein ubiquitination. Functions as an E3 ubiquitin ligase. The polypeptide is U-box domain-containing protein 29 (PUB29) (Arabidopsis thaliana (Mouse-ear cress)).